The following is a 654-amino-acid chain: tRNA 5-methylaminomethyl-2-thiouridine biosynthesis bifunctional protein MnmC (654 aa).

A tRNA (mnm(5)s(2)U34)-methyltransferase region spans residues 1–235 (MSDFQHAQLD…KREMLGGTYQ (235 aa)). The segment at 261 to 654 (VGGGLAGCAS…LRDLVRGQRG (394 aa)) is FAD-dependent cmnm(5)s(2)U34 oxidoreductase.

In the N-terminal section; belongs to the methyltransferase superfamily. tRNA (mnm(5)s(2)U34)-methyltransferase family. This sequence in the C-terminal section; belongs to the DAO family. FAD serves as cofactor.

Its subcellular location is the cytoplasm. It catalyses the reaction 5-aminomethyl-2-thiouridine(34) in tRNA + S-adenosyl-L-methionine = 5-methylaminomethyl-2-thiouridine(34) in tRNA + S-adenosyl-L-homocysteine + H(+). Its function is as follows. Catalyzes the last two steps in the biosynthesis of 5-methylaminomethyl-2-thiouridine (mnm(5)s(2)U) at the wobble position (U34) in tRNA. Catalyzes the FAD-dependent demodification of cmnm(5)s(2)U34 to nm(5)s(2)U34, followed by the transfer of a methyl group from S-adenosyl-L-methionine to nm(5)s(2)U34, to form mnm(5)s(2)U34. The chain is tRNA 5-methylaminomethyl-2-thiouridine biosynthesis bifunctional protein MnmC from Pseudomonas aeruginosa (strain UCBPP-PA14).